The chain runs to 124 residues: 14 kDa peptide of ubiquinol-cytochrome c2 oxidoreductase complex (124 aa).

The chain crosses the membrane as a helical span at residues 85 to 102 (LGGFASGALLALALAGIF).

The protein localises to the cell inner membrane. In terms of biological role, component of the ubiquinol-cytochrome c reductase complex (complex III or cytochrome b-c1 complex), which is a respiratory chain that generates an electrochemical potential coupled to ATP synthesis. This chain is 14 kDa peptide of ubiquinol-cytochrome c2 oxidoreductase complex, found in Cereibacter sphaeroides (Rhodobacter sphaeroides).